A 208-amino-acid chain; its full sequence is Sodium/potassium-transporting ATPase subunit beta-1-interacting protein 4 (208 aa).

Helical transmembrane passes span Ala35–Ile55, Val62–Phe82, and Cys151–Phe171.

It belongs to the NKAIN family. Interacts with ATP1B1.

The protein localises to the cell membrane. The protein is Sodium/potassium-transporting ATPase subunit beta-1-interacting protein 4 (NKAIN4) of Homo sapiens (Human).